The following is a 907-amino-acid chain: Lateral signaling target protein 2 homolog (907 aa).

Disordered stretches follow at residues 339–395 (SSDN…DPAN), 463–604 (LTDS…SGDA), 662–688 (NSSP…PDPA), 716–756 (EVNA…SENG), and 770–834 (GSGG…EERR). Polar residues predominate over residues 351-361 (DISSFYTSNNR). Acidic residues predominate over residues 367-393 (EPNEDDDVSESNDEDEDEGEEVDEDDP). 2 stretches are compositionally biased toward polar residues: residues 463–475 (LTDS…NPSL) and 486–495 (PVTSSHPIAQ). Residues 501 to 516 (SEEEGEVDEYDEDDSE) are compositionally biased toward acidic residues. Over residues 525 to 549 (HHTKHQRRHRHHHHHHRKHYSKHRS) the composition is skewed to basic residues. Residues 550 to 565 (SAAGSAGTSGTTCSAA) are compositionally biased toward low complexity. Positions 568–580 (QISSCDTSPSSGG) are enriched in polar residues. Gly residues predominate over residues 592-602 (GSSGNSSGGSG). Over residues 742-751 (APRTMMTTAA) the composition is skewed to polar residues. The span at 777–793 (GSSRSSQERSVSLSETS) shows a compositional bias: low complexity. A compositionally biased stretch (polar residues) spans 816 to 826 (PKSVQSEQSGQ). An FYVE-type zinc finger spans residues 845 to 905 (DGDAPRCMAC…VCRECFVREV (61 aa)). Zn(2+) contacts are provided by cysteine 851, cysteine 854, cysteine 867, cysteine 870, cysteine 875, cysteine 878, cysteine 897, and cysteine 900.

This sequence belongs to the lst-2 family.

Negative regulator of epidermal growth factor receptor (EGFR) signaling. This Culex quinquefasciatus (Southern house mosquito) protein is Lateral signaling target protein 2 homolog.